The chain runs to 159 residues: Protein SPA, chloroplastic (159 aa).

The N-terminal 47 residues, 1-47 (MLTAPSLSRFKSPFISSPLKLPTLSSSFFTQKFHQTCRRRNSYPCIK), are a transit peptide targeting the chloroplast. A helical membrane pass occupies residues 56 to 76 (VIAITVGVLSVAIGVGIPVFY). Residues 85 to 145 (KRENTQPCFP…TCTTCQGSGI (61 aa)) are CR-type-like. 4 CXXCXGXG motif repeats span residues 92–99 (CFPCTGTG), 103–110 (CRFCMGTG), 126–133 (CINCDGAG), and 137–144 (CTTCQGSG).

Expressed in source leaves. Lower levels of expression in fruits and stems.

It is found in the plastid. Its subcellular location is the chloroplast thylakoid membrane. Functionally, participates in determining harvest index (HI) by affecting source-sink carbon distribution. Up-regulates the conversion of fixed carbon to exportable sugars. This chain is Protein SPA, chloroplastic, found in Solanum lycopersicum (Tomato).